A 117-amino-acid polypeptide reads, in one-letter code: Serine rich endogenous peptide 5 (117 aa).

A signal peptide spans 1–31 (MATKTSNFVSLRVSLFILLLFISSQVAIADA). Positions 41–55 (LQIVRRSRSQRGRQY) match the SCOOP motif motif. The span at 42-51 (QIVRRSRSQR) shows a compositional bias: basic residues. Residues 42–117 (QIVRRSRSQR…LPYASSPTST (76 aa)) form a disordered region. A SxS motif essential for MIK2 binding motif is present at residues 47–49 (SRS). Over residues 60-84 (LRVPPPPPPPLPQMPSAATPPPMPQ) the composition is skewed to pro residues.

In terms of assembly, interacts with MIK2 (via extracellular leucine-rich repeat domain); this interaction triggers the formation of complex between MIK2 and the BAK1/SERK3 and SERK4 coreceptors, and subsequent BAK1 activation by phosphorylation.

It is found in the cell membrane. The protein resides in the secreted. Its subcellular location is the extracellular space. The protein localises to the apoplast. In terms of biological role, brassicaceae-specific phytocytokine (plant endogenous peptide released into the apoplast) perceived by MIK2 in a BAK1/SERK3 and SERK4 coreceptors-dependent manner, that modulates various physiological and antimicrobial processes including growth prevention and reactive oxygen species (ROS) response regulation. In Arabidopsis thaliana (Mouse-ear cress), this protein is Serine rich endogenous peptide 5.